The chain runs to 289 residues: 33 kDa chaperonin (289 aa).

Disulfide bonds link Cys-237/Cys-239 and Cys-270/Cys-273.

This sequence belongs to the HSP33 family. Post-translationally, under oxidizing conditions two disulfide bonds are formed involving the reactive cysteines. Under reducing conditions zinc is bound to the reactive cysteines and the protein is inactive.

The protein resides in the cytoplasm. Redox regulated molecular chaperone. Protects both thermally unfolding and oxidatively damaged proteins from irreversible aggregation. Plays an important role in the bacterial defense system toward oxidative stress. The polypeptide is 33 kDa chaperonin (Oceanobacillus iheyensis (strain DSM 14371 / CIP 107618 / JCM 11309 / KCTC 3954 / HTE831)).